The chain runs to 156 residues: Small ribosomal subunit protein uS7 (156 aa).

This sequence belongs to the universal ribosomal protein uS7 family. Part of the 30S ribosomal subunit. Contacts proteins S9 and S11.

Functionally, one of the primary rRNA binding proteins, it binds directly to 16S rRNA where it nucleates assembly of the head domain of the 30S subunit. Is located at the subunit interface close to the decoding center, probably blocks exit of the E-site tRNA. This Mycobacterium leprae (strain Br4923) protein is Small ribosomal subunit protein uS7.